The chain runs to 335 residues: Tyrosine-protein phosphatase 1 (335 aa).

One can recognise a Tyrosine-protein phosphatase domain in the interval 15-328; that stretch reads LLGKFKFIQN…LFIYHAAKYL (314 aa). The residue at position 83 (serine 83) is a Phosphoserine; by CLK1. Residue cysteine 252 is the Phosphocysteine intermediate of the active site.

Belongs to the protein-tyrosine phosphatase family. Non-receptor class subfamily. In terms of processing, activated by phosphorylation at Ser-83.

It is found in the cytoplasm. It carries out the reaction O-phospho-L-tyrosyl-[protein] + H2O = L-tyrosyl-[protein] + phosphate. Its function is as follows. Is not required for vegetative growth. This is Tyrosine-protein phosphatase 1 (PTP1) from Saccharomyces cerevisiae (strain ATCC 204508 / S288c) (Baker's yeast).